The sequence spans 556 residues: Calcium-dependent protein kinase 5 (556 aa).

The segment at 1 to 40 is disordered; the sequence is MGNSCRGSFKDKLDEGDNNKPEDYSKTSTTNLSSNSDHSP. The N-myristoyl glycine moiety is linked to residue Gly2. The span at 8 to 25 shows a compositional bias: basic and acidic residues; the sequence is SFKDKLDEGDNNKPEDYS. Residues 26–39 show a composition bias toward low complexity; that stretch reads KTSTTNLSSNSDHS. The Protein kinase domain maps to 97–355; the sequence is YTLSRKLGQG…AHEVLRHPWI (259 aa). ATP is bound by residues 103–111 and Lys126; that span reads LGQGQFGTT. Asp221 acts as the Proton acceptor in catalysis. Ser261 is subject to Phosphoserine. The tract at residues 361 to 391 is autoinhibitory domain; it reads APDRALDPAVLSRLKQFSAMNKLKKMALKVI. EF-hand domains are found at residues 398 to 433, 434 to 469, 470 to 505, and 509 to 539; these read EEIA…YGST, LKDT…LNKL, EREE…HGMA, and LEDI…GNAG. Residues Asp411, Asp413, Ser415, Glu422, Asp447, Asp449, Ser451, Thr453, Glu458, Asp483, Asp485, Ser487, Glu494, Asp517, Asn519, Asp521, Lys523, and Glu528 each coordinate Ca(2+).

Belongs to the protein kinase superfamily. Ser/Thr protein kinase family. CDPK subfamily.

It localises to the membrane. The catalysed reaction is L-seryl-[protein] + ATP = O-phospho-L-seryl-[protein] + ADP + H(+). It carries out the reaction L-threonyl-[protein] + ATP = O-phospho-L-threonyl-[protein] + ADP + H(+). Its activity is regulated as follows. Activated by calcium. Autophosphorylation may play an important role in the regulation of the kinase activity. Its function is as follows. May play a role in signal transduction pathways that involve calcium as a second messenger. This Arabidopsis thaliana (Mouse-ear cress) protein is Calcium-dependent protein kinase 5 (CPK5).